The sequence spans 990 residues: Aconitate hydratase 3, mitochondrial (990 aa).

The transit peptide at 1–78 (MYLTASSSAS…PFRFTSQIRA (78 aa)) directs the protein to the mitochondrion. A Phosphoserine modification is found at Ser-91. Residues Gln-182 and 301 to 303 (DSH) each bind substrate. Positions 533, 599, and 602 each coordinate [4Fe-4S] cluster. Residues Arg-632, Arg-637, Arg-795, and 876-877 (SR) contribute to the substrate site.

This sequence belongs to the aconitase/IPM isomerase family. In terms of assembly, monomer. Interacts with B'GAMMA in the cytosol. The cofactor is [4Fe-4S] cluster. Post-translationally, phosphorylated at Ser-91 in the cytoplasm; this phosphorylation requires the presence of B'GAMMA. In terms of tissue distribution, major aconitase isoenzyme in young seedlings. Expressed in roots, leaves, stems and flowers, and, at low levels, in seeds.

The protein resides in the mitochondrion. It localises to the cytoplasm. The enzyme catalyses citrate = D-threo-isocitrate. Its pathway is carbohydrate metabolism; tricarboxylic acid cycle; isocitrate from oxaloacetate: step 2/2. In terms of biological role, catalyzes the isomerization of citrate to isocitrate via cis-aconitate. Contributes to oxidative stress tolerance. Modulates cytosolic citrate metabolism during lipid mobilization. Required during seedling growth. In Arabidopsis thaliana (Mouse-ear cress), this protein is Aconitate hydratase 3, mitochondrial.